The sequence spans 220 residues: MTKGILGRKVGMTQVFGENGELIPVTVVEAAQNVVLQKKTEEVDGYSSIQIGFEDKQAYKADRKSNKFATKPAEGHAKKAGTAPKRFIREFRNVDTEAYEVGQEVTVDTFQTGDIVDVTGVSKGKGFQGAIKRHGQSRGPMSHGSRYHRRPGSMGMASDASKVFKGKALPGRMGGNTVTMQNLEIVKVDAENNVILVKGNVPGPKKGLVKIQTSIKKGNK.

Residues 126 to 158 form a disordered region; the sequence is GFQGAIKRHGQSRGPMSHGSRYHRRPGSMGMAS.

This sequence belongs to the universal ribosomal protein uL3 family. In terms of assembly, part of the 50S ribosomal subunit. Forms a cluster with proteins L14 and L19.

One of the primary rRNA binding proteins, it binds directly near the 3'-end of the 23S rRNA, where it nucleates assembly of the 50S subunit. The chain is Large ribosomal subunit protein uL3 from Macrococcus caseolyticus (strain JCSC5402) (Macrococcoides caseolyticum).